Consider the following 796-residue polypeptide: Lon protease 2 (796 aa).

In terms of domain architecture, Lon N-terminal spans 9–206 (LPIVILKENV…KLIVNLSIEI (198 aa)). 352-359 (GPPGIGKT) serves as a coordination point for ATP. The 180-residue stretch at 617-796 (IDSSGFVYGL…EEVFDYLNII (180 aa)) folds into the Lon proteolytic domain. Catalysis depends on residues serine 702 and lysine 745.

This sequence belongs to the peptidase S16 family. As to quaternary structure, homohexamer. Organized in a ring with a central cavity.

The protein resides in the cytoplasm. It catalyses the reaction Hydrolysis of proteins in presence of ATP.. Its function is as follows. ATP-dependent serine protease that mediates the selective degradation of mutant and abnormal proteins as well as certain short-lived regulatory proteins. Required for cellular homeostasis and for survival from DNA damage and developmental changes induced by stress. Degrades polypeptides processively to yield small peptide fragments that are 5 to 10 amino acids long. Binds to DNA in a double-stranded, site-specific manner. The polypeptide is Lon protease 2 (lon2) (Borreliella burgdorferi (strain ATCC 35210 / DSM 4680 / CIP 102532 / B31) (Borrelia burgdorferi)).